We begin with the raw amino-acid sequence, 143 residues long: Large ribosomal subunit protein uL11 (143 aa).

This sequence belongs to the universal ribosomal protein uL11 family. In terms of assembly, part of the ribosomal stalk of the 50S ribosomal subunit. Interacts with L10 and the large rRNA to form the base of the stalk. L10 forms an elongated spine to which L12 dimers bind in a sequential fashion forming a multimeric L10(L12)X complex. Post-translationally, one or more lysine residues are methylated.

Its function is as follows. Forms part of the ribosomal stalk which helps the ribosome interact with GTP-bound translation factors. This is Large ribosomal subunit protein uL11 from Psychrobacter sp. (strain PRwf-1).